The following is a 192-amino-acid chain: Pyridoxal 5'-phosphate synthase subunit PdxT (192 aa).

Residue 53 to 55 participates in L-glutamine binding; sequence GES. Cysteine 82 serves as the catalytic Nucleophile. L-glutamine is bound by residues arginine 108 and 134 to 135; that span reads IR. Catalysis depends on charge relay system residues histidine 170 and glutamate 172.

This sequence belongs to the glutaminase PdxT/SNO family. In the presence of PdxS, forms a dodecamer of heterodimers. Only shows activity in the heterodimer.

It carries out the reaction aldehydo-D-ribose 5-phosphate + D-glyceraldehyde 3-phosphate + L-glutamine = pyridoxal 5'-phosphate + L-glutamate + phosphate + 3 H2O + H(+). It catalyses the reaction L-glutamine + H2O = L-glutamate + NH4(+). It functions in the pathway cofactor biosynthesis; pyridoxal 5'-phosphate biosynthesis. Functionally, catalyzes the hydrolysis of glutamine to glutamate and ammonia as part of the biosynthesis of pyridoxal 5'-phosphate. The resulting ammonia molecule is channeled to the active site of PdxS. This is Pyridoxal 5'-phosphate synthase subunit PdxT from Methanosphaera stadtmanae (strain ATCC 43021 / DSM 3091 / JCM 11832 / MCB-3).